A 216-amino-acid polypeptide reads, in one-letter code: Ras-related protein YPTC6 (216 aa).

19-26 (GDSGVGKS) contacts GTP. The Effector region signature appears at 41 to 49 (SKSTIGVEF). GTP-binding positions include 67–71 (DTAGQ) and 125–128 (NKSD). Residues C214 and C215 are each lipidated (S-geranylgeranyl cysteine).

The protein belongs to the small GTPase superfamily. Rab family.

Its subcellular location is the cell membrane. The polypeptide is Ras-related protein YPTC6 (YPTC6) (Chlamydomonas reinhardtii (Chlamydomonas smithii)).